Reading from the N-terminus, the 215-residue chain is ATP-dependent dethiobiotin synthetase BioD (215 aa).

13–18 provides a ligand contact to ATP; that stretch reads DIGKTV. Residue T17 participates in Mg(2+) binding. K38 is a catalytic residue. T42 contacts substrate. ATP contacts are provided by residues D50, 115–118, and 175–176; these read EGAG and NH. Residues D50 and E115 each coordinate Mg(2+).

It belongs to the dethiobiotin synthetase family. As to quaternary structure, homodimer. Requires Mg(2+) as cofactor.

Its subcellular location is the cytoplasm. The enzyme catalyses (7R,8S)-7,8-diammoniononanoate + CO2 + ATP = (4R,5S)-dethiobiotin + ADP + phosphate + 3 H(+). The protein operates within cofactor biosynthesis; biotin biosynthesis; biotin from 7,8-diaminononanoate: step 1/2. Functionally, catalyzes a mechanistically unusual reaction, the ATP-dependent insertion of CO2 between the N7 and N8 nitrogen atoms of 7,8-diaminopelargonic acid (DAPA, also called 7,8-diammoniononanoate) to form a ureido ring. This chain is ATP-dependent dethiobiotin synthetase BioD, found in Neisseria meningitidis serogroup C / serotype 2a (strain ATCC 700532 / DSM 15464 / FAM18).